A 792-amino-acid polypeptide reads, in one-letter code: Type 2 topoisomerase subunit B (792 aa).

The Toprim domain maps to 423 to 537; sequence CEIFLVEGDS…EGYVYIAEPP (115 aa). E429, D502, and D504 together coordinate Mg(2+).

Belongs to the type II topoisomerase GyrB family. In terms of assembly, heterotetramer, composed of two GyrA and two GyrB chains. In the heterotetramer, 'GyrA' contains the active site tyrosine that forms a transient covalent intermediate with DNA, while 'GyrB' binds cofactors and catalyzes ATP hydrolysis. It depends on Mg(2+) as a cofactor. Requires Mn(2+) as cofactor. Ca(2+) is required as a cofactor.

Its subcellular location is the cytoplasm. The catalysed reaction is ATP-dependent breakage, passage and rejoining of double-stranded DNA.. In terms of biological role, a type II topoisomerase. Despite its similarity to DNA gyrase, this enzyme is not able to supercoil DNA, and instead acts like topoisomerase IV. Relaxes both positively and negatively supercoiled DNA in an ATP-dependent fashion, decatenates interlocked circles. If this subunit is reconstituted with GyrA from E.coli the hybrid enzyme supercoils relaxed plasmid DNA; if paired with E.coli ParC supercoiling is not restored. This the first bacteria shown to not contain DNA gyrase, although it has 2 copies of a reverse gyrase that introduces positive supercoils. Type II topoisomerases break and join 2 DNA strands simultaneously in an ATP-dependent manner. The sequence is that of Type 2 topoisomerase subunit B from Aquifex aeolicus (strain VF5).